The following is a 101-amino-acid chain: Co-chaperonin GroES 1 (101 aa).

Belongs to the GroES chaperonin family. In terms of assembly, heptamer of 7 subunits arranged in a ring. Interacts with the chaperonin GroEL.

Its subcellular location is the cytoplasm. Its function is as follows. Together with the chaperonin GroEL, plays an essential role in assisting protein folding. The GroEL-GroES system forms a nano-cage that allows encapsulation of the non-native substrate proteins and provides a physical environment optimized to promote and accelerate protein folding. GroES binds to the apical surface of the GroEL ring, thereby capping the opening of the GroEL channel. The polypeptide is Co-chaperonin GroES 1 (Rhodopirellula baltica (strain DSM 10527 / NCIMB 13988 / SH1)).